The sequence spans 413 residues: MSDFIFTSESVTEGHPDKICDQISDAVLDALLKEDPESRVACETVVNTGLCLLTGEITSRAKLDYIKLVRKVIKEIGYEGAKAGGFDSNSCAVLVALDEQSPDISQGVNEADDLNEDLENNTGAGDQGIMFGYACDETPELMPLPISLAHRLARQLAKVRHENVLEYLLPDGKTQVSIDYKKGVPVSINTILISTQHRAEIDGIINEKEIRQKITDDLWINVVLPVTEDLEIKPSKEKTRFLVNPTGKFVVGGPQGDAGLTGRKIIVDTYGGYARHGGGAFSGKDPTKVDRSAAYAARYVAKSIVKAKLAKKAEVQLSYAIGVAKPISILVDTFGTSVISQDNLKELIENNFDLRPAAIIKEFDLRNLPKKLGGEFYRKTASYGHFGRNDLNLPWESVEVKAAQLVEASKDFL.

His15 lines the ATP pocket. Position 17 (Asp17) interacts with Mg(2+). Glu43 is a binding site for K(+). L-methionine contacts are provided by Glu56 and Gln100. A flexible loop region spans residues 100-110 (QSPDISQGVNE). Residues 171-173 (DGK), 248-249 (KF), Asp257, 263-264 (RK), Ala280, and Lys284 each bind ATP. Asp257 lines the L-methionine pocket. Lys288 lines the L-methionine pocket.

It belongs to the AdoMet synthase family. In terms of assembly, homotetramer; dimer of dimers. The cofactor is Mg(2+). K(+) is required as a cofactor.

The protein resides in the cytoplasm. It carries out the reaction L-methionine + ATP + H2O = S-adenosyl-L-methionine + phosphate + diphosphate. Its pathway is amino-acid biosynthesis; S-adenosyl-L-methionine biosynthesis; S-adenosyl-L-methionine from L-methionine: step 1/1. In terms of biological role, catalyzes the formation of S-adenosylmethionine (AdoMet) from methionine and ATP. The overall synthetic reaction is composed of two sequential steps, AdoMet formation and the subsequent tripolyphosphate hydrolysis which occurs prior to release of AdoMet from the enzyme. The protein is S-adenosylmethionine synthase of Prochlorococcus marinus (strain MIT 9515).